A 469-amino-acid chain; its full sequence is Neuraminidase (469 aa).

The Intravirion portion of the chain corresponds to 1–9 (MNPNQKIIT). Residues 10 to 30 (IGSVSLIIATICFLMQIAILV) traverse the membrane as a helical segment. The involved in apical transport and lipid raft association stretch occupies residues 11–33 (GSVSLIIATICFLMQIAILVTTV). Residues 31-469 (TTVTLHFKQY…DGADINLMPI (439 aa)) lie on the Virion surface side of the membrane. The tract at residues 36-88 (HFKQYECDSPANNQVMPCEPIIIERNITEIVYLTNTTIEKEICPKLVEYRNWS) is hypervariable stalk region. Asparagine 61, asparagine 70, and asparagine 86 each carry an N-linked (GlcNAc...) asparagine; by host glycan. The head of neuraminidase stretch occupies residues 91–469 (QCKITGFAPF…DGADINLMPI (379 aa)). Intrachain disulfides connect cysteine 92/cysteine 417, cysteine 124/cysteine 129, cysteine 183/cysteine 230, cysteine 232/cysteine 237, cysteine 278/cysteine 291, cysteine 280/cysteine 289, cysteine 318/cysteine 337, and cysteine 421/cysteine 447. Arginine 118 serves as a coordination point for substrate. Asparagine 146 carries N-linked (GlcNAc...) asparagine; by host glycosylation. Aspartate 151 acts as the Proton donor/acceptor in catalysis. Arginine 152 contacts substrate. N-linked (GlcNAc...) asparagine; by host glycosylation is found at asparagine 200 and asparagine 234. Residue 276 to 277 (EE) coordinates substrate. Arginine 292 lines the substrate pocket. Residues aspartate 293, glycine 297, and aspartate 324 each coordinate Ca(2+). Arginine 371 contributes to the substrate binding site. Asparagine 402 carries N-linked (GlcNAc...) asparagine; by host glycosylation. Tyrosine 406 acts as the Nucleophile in catalysis.

It belongs to the glycosyl hydrolase 34 family. As to quaternary structure, homotetramer. Ca(2+) serves as cofactor. In terms of processing, N-glycosylated.

The protein resides in the virion membrane. It localises to the host apical cell membrane. It catalyses the reaction Hydrolysis of alpha-(2-&gt;3)-, alpha-(2-&gt;6)-, alpha-(2-&gt;8)- glycosidic linkages of terminal sialic acid residues in oligosaccharides, glycoproteins, glycolipids, colominic acid and synthetic substrates.. Inhibited by the neuraminidase inhibitors zanamivir (Relenza) and oseltamivir (Tamiflu). These drugs interfere with the release of progeny virus from infected cells and are effective against all influenza strains. Resistance to neuraminidase inhibitors is quite rare. In terms of biological role, catalyzes the removal of terminal sialic acid residues from viral and cellular glycoconjugates. Cleaves off the terminal sialic acids on the glycosylated HA during virus budding to facilitate virus release. Additionally helps virus spread through the circulation by further removing sialic acids from the cell surface. These cleavages prevent self-aggregation and ensure the efficient spread of the progeny virus from cell to cell. Otherwise, infection would be limited to one round of replication. Described as a receptor-destroying enzyme because it cleaves a terminal sialic acid from the cellular receptors. May facilitate viral invasion of the upper airways by cleaving the sialic acid moieties on the mucin of the airway epithelial cells. Likely to plays a role in the budding process through its association with lipid rafts during intracellular transport. May additionally display a raft-association independent effect on budding. Plays a role in the determination of host range restriction on replication and virulence. Sialidase activity in late endosome/lysosome traffic seems to enhance virus replication. The polypeptide is Neuraminidase (Aves (whales)).